A 440-amino-acid polypeptide reads, in one-letter code: Thymidine phosphorylase (440 aa).

This sequence belongs to the thymidine/pyrimidine-nucleoside phosphorylase family. In terms of assembly, homodimer.

The enzyme catalyses thymidine + phosphate = 2-deoxy-alpha-D-ribose 1-phosphate + thymine. The protein operates within pyrimidine metabolism; dTMP biosynthesis via salvage pathway; dTMP from thymine: step 1/2. Its function is as follows. The enzymes which catalyze the reversible phosphorolysis of pyrimidine nucleosides are involved in the degradation of these compounds and in their utilization as carbon and energy sources, or in the rescue of pyrimidine bases for nucleotide synthesis. The polypeptide is Thymidine phosphorylase (Enterobacter sp. (strain 638)).